A 262-amino-acid chain; its full sequence is Small ribosomal subunit protein eS1 (262 aa).

This sequence belongs to the eukaryotic ribosomal protein eS1 family. Component of the small ribosomal subunit. Mature ribosomes consist of a small (40S) and a large (60S) subunit. The 40S subunit contains about 33 different proteins and 1 molecule of RNA (18S). The 60S subunit contains about 49 different proteins and 3 molecules of RNA (25S, 5.8S and 5S).

The protein resides in the cytoplasm. In Plasmodium knowlesi (strain H), this protein is Small ribosomal subunit protein eS1.